The following is a 336-amino-acid chain: Protein SphX (336 aa).

Positions 1–27 (MFDLSRLSRGIVPMALLLLGISACTPS) are cleaved as a signal peptide.

It belongs to the PstS family.

In terms of biological role, may be involved in the system for phosphate transport across the cytoplasmic membrane. The sequence is that of Protein SphX (sphX) from Synechocystis sp. (strain ATCC 27184 / PCC 6803 / Kazusa).